The chain runs to 1004 residues: 2-oxoglutarate dehydrogenase E1 component (1004 aa).

The protein belongs to the alpha-ketoglutarate dehydrogenase family. Homodimer. Part of the 2-oxoglutarate dehydrogenase (OGDH) complex composed of E1 (2-oxoglutarate dehydrogenase), E2 (dihydrolipoamide succinyltransferase) and E3 (dihydrolipoamide dehydrogenase); the complex contains multiple copies of the three enzymatic components (E1, E2 and E3). It depends on thiamine diphosphate as a cofactor.

It catalyses the reaction N(6)-[(R)-lipoyl]-L-lysyl-[protein] + 2-oxoglutarate + H(+) = N(6)-[(R)-S(8)-succinyldihydrolipoyl]-L-lysyl-[protein] + CO2. Functionally, E1 component of the 2-oxoglutarate dehydrogenase (OGDH) complex which catalyzes the decarboxylation of 2-oxoglutarate, the first step in the conversion of 2-oxoglutarate to succinyl-CoA and CO(2). This Brucella melitensis biotype 2 (strain ATCC 23457) protein is 2-oxoglutarate dehydrogenase E1 component.